The primary structure comprises 350 residues: Bifunctional nitrilase/nitrile hydratase NIT4B (350 aa).

The CN hydrolase domain maps to 30 to 302 (VRATVVQAST…EALISADLDL (273 aa)). Glu-70 serves as the catalytic Proton acceptor. Residue Lys-157 is part of the active site. Cys-191 functions as the Nucleophile in the catalytic mechanism.

The protein belongs to the carbon-nitrogen hydrolase superfamily. Nitrilase family. Highly expressed in leaves and cotyledons, lower expression in stems and roots.

It catalyses the reaction L-asparagine = 3-cyano-L-alanine + H2O. It carries out the reaction 3-cyano-L-alanine + 2 H2O = L-aspartate + NH4(+). Involved in the cyanide detoxification pathway. Has nitrilase and nitrile-hydratase activity in the ratio 3.3:1, producing both asparagine and aspartic acid from beta-cyano-L-alanine (Ala(CN)). Can also use 3-phenylpropionitrile as substrate, but not indole-3-acetonitrile. The polypeptide is Bifunctional nitrilase/nitrile hydratase NIT4B (NIT4B) (Lupinus angustifolius (Narrow-leaved blue lupine)).